Consider the following 347-residue polypeptide: Protein POOR HOMOLOGOUS SYNAPSIS 1 (347 aa).

The protein resides in the cytoplasm. Required for accurate chromosome segregation in meiosis. Required for pairing to occur between homologous chromosomes. Acts in early recombination steps and ensures pairing fidelity and proper repair of meiotic DNA double-strand-breaks. Regulates recombination and pairing of homologous chromosomes during meiotic prophase by controlling transport of RAD50 from cytoplasm to the nucleus. May affect pairing of the gene-rich fraction of the genome rather than preventing pairing between repetitive DNA elements. This Zea mays (Maize) protein is Protein POOR HOMOLOGOUS SYNAPSIS 1.